We begin with the raw amino-acid sequence, 310 residues long: 4-diphosphocytidyl-2-C-methyl-D-erythritol kinase (310 aa).

Residue Lys11 is part of the active site. 95–105 (PIGAGLAGGSA) serves as a coordination point for ATP. The active site involves Asp137.

It belongs to the GHMP kinase family. IspE subfamily.

It carries out the reaction 4-CDP-2-C-methyl-D-erythritol + ATP = 4-CDP-2-C-methyl-D-erythritol 2-phosphate + ADP + H(+). It participates in isoprenoid biosynthesis; isopentenyl diphosphate biosynthesis via DXP pathway; isopentenyl diphosphate from 1-deoxy-D-xylulose 5-phosphate: step 3/6. Its function is as follows. Catalyzes the phosphorylation of the position 2 hydroxy group of 4-diphosphocytidyl-2C-methyl-D-erythritol. The protein is 4-diphosphocytidyl-2-C-methyl-D-erythritol kinase of Acaryochloris marina (strain MBIC 11017).